The chain runs to 184 residues: Dual-action ribosomal maturation protein DarP (184 aa).

Positions 1–21 (MYKHPDEEWLDEIPGQQENED) are disordered.

This sequence belongs to the DarP family.

The protein resides in the cytoplasm. Member of a network of 50S ribosomal subunit biogenesis factors which assembles along the 30S-50S interface, preventing incorrect 23S rRNA structures from forming. Promotes peptidyl transferase center (PTC) maturation. The polypeptide is Dual-action ribosomal maturation protein DarP (Edwardsiella ictaluri (strain 93-146)).